The primary structure comprises 286 residues: Deleted in azoospermia-like (286 aa).

The region spanning 30 to 105 (NTVFVGGIDI…KKLKLGPAIR (76 aa)) is the RRM domain. Residues 155–180 (ACPYPSSPPMAIQQIPVGCQQPSYFQ) enclose the DAZ domain.

This sequence belongs to the RRM DAZ family. As to quaternary structure, interacts with the C-terminus of pabp1 and with epabp. Prior to oocyte maturation, found in a complex with epabp and pum2 proteins and spdy1 mRNA; pum2 dissociates from the complex during maturation. Germ-line specific; expressed in adult testis and ovary. Localized specifically to the oocyte and embryonic germ plasm and to migrating primordial germ cells (PGCs).

The protein localises to the cytoplasm. Functionally, RNA-binding protein that is required for primordial germ cell (PGC) differentiation and indirectly necessary for the migration of PGCs through the endoderm. May promote meiotic cell division during spermatogenesis. Shows a preference for G- and U-rich RNAs and probably binds the 3'-UTR of target mRNAs. Stimulates the initiation of translation of mRNAs through the recruitment of poly(A)-binding proteins (PABPs). This chain is Deleted in azoospermia-like, found in Xenopus tropicalis (Western clawed frog).